A 393-amino-acid polypeptide reads, in one-letter code: Large ribosomal subunit protein uL2m (393 aa).

The N-terminal 43 residues, 1–43 (MLVLGSLRSALSCSSTASLISKRNPCYPYGILCRTLSQSVKLW), are a transit peptide targeting the mitochondrion. The segment at 337-393 (AMNKCDHPHGGGRGKSKSNKLSMSPWGQLAKGYKTRRGKNQNRMKVKDRPRGKDARL) is disordered. Basic residues predominate over residues 369-380 (YKTRRGKNQNRM). The segment covering 381-393 (KVKDRPRGKDARL) has biased composition (basic and acidic residues).

The protein belongs to the universal ribosomal protein uL2 family. In terms of assembly, component of the mitochondrial large ribosomal subunit (mt-LSU). Mature yeast 74S mitochondrial ribosomes consist of a small (37S) and a large (54S) subunit. The 37S small subunit contains a 15S ribosomal RNA (15S mt-rRNA) and 34 different proteins. The 54S large subunit contains a 21S rRNA (21S mt-rRNA) and 46 different proteins. uL2m has a Na/K ligand binding site.

The protein resides in the mitochondrion. Its function is as follows. Component of the mitochondrial ribosome (mitoribosome), a dedicated translation machinery responsible for the synthesis of mitochondrial genome-encoded proteins, including at least some of the essential transmembrane subunits of the mitochondrial respiratory chain. The mitoribosomes are attached to the mitochondrial inner membrane and translation products are cotranslationally integrated into the membrane. The chain is Large ribosomal subunit protein uL2m (RML2) from Saccharomyces cerevisiae (strain ATCC 204508 / S288c) (Baker's yeast).